Reading from the N-terminus, the 141-residue chain is Large ribosomal subunit protein uL16 (141 aa).

The protein belongs to the universal ribosomal protein uL16 family. In terms of assembly, part of the 50S ribosomal subunit.

Functionally, binds 23S rRNA and is also seen to make contacts with the A and possibly P site tRNAs. In Nostoc punctiforme (strain ATCC 29133 / PCC 73102), this protein is Large ribosomal subunit protein uL16.